The following is a 106-amino-acid chain: Iron-sulfur cluster assembly protein CyaY (106 aa).

This sequence belongs to the frataxin family.

Functionally, involved in iron-sulfur (Fe-S) cluster assembly. May act as a regulator of Fe-S biogenesis. This is Iron-sulfur cluster assembly protein CyaY from Citrobacter koseri (strain ATCC BAA-895 / CDC 4225-83 / SGSC4696).